The following is a 127-amino-acid chain: Fluoride-specific ion channel FluC (127 aa).

The next 3 membrane-spanning stretches (helical) occupy residues 28–48 (LALFGFPWMTCFINISGSLAM), 73–93 (TGVLGGYTTFSTFSLENALLI), and 98–118 (VGLAVLYSLVSVGLGLGGLFL). Na(+)-binding residues include G77 and T80.

The protein belongs to the fluoride channel Fluc/FEX (TC 1.A.43) family.

Its subcellular location is the cell inner membrane. It catalyses the reaction fluoride(in) = fluoride(out). With respect to regulation, na(+) is not transported, but it plays an essential structural role and its presence is essential for fluoride channel function. Functionally, fluoride-specific ion channel. Important for reducing fluoride concentration in the cell, thus reducing its toxicity. In Beijerinckia indica subsp. indica (strain ATCC 9039 / DSM 1715 / NCIMB 8712), this protein is Fluoride-specific ion channel FluC.